The chain runs to 91 residues: Acylphosphatase (91 aa).

The Acylphosphatase-like domain maps to 3-90 (QYRIIVDGRV…EGHHRFSIVY (88 aa)). Active-site residues include Arg18 and Asn36.

It belongs to the acylphosphatase family.

It catalyses the reaction an acyl phosphate + H2O = a carboxylate + phosphate + H(+). The protein is Acylphosphatase (acyP) of Bacillus subtilis (strain 168).